Here is a 137-residue protein sequence, read N- to C-terminus: MQATENKEKVVYWGTGRRKSAVARVRLVPGSGEIIVNKKPGNIYFNRIPDYLQAIKGPLETLGLENDYDILVNAHGGGLTGQADAVKLGVARALCELAPENRPPLKAEGYLTRDPRAKERKKYGLHKARKAPQYSKR.

Positions 103–137 (PPLKAEGYLTRDPRAKERKKYGLHKARKAPQYSKR) are disordered. Positions 118–137 (KERKKYGLHKARKAPQYSKR) are enriched in basic residues.

The protein belongs to the universal ribosomal protein uS9 family.

This chain is Small ribosomal subunit protein uS9, found in Crocosphaera subtropica (strain ATCC 51142 / BH68) (Cyanothece sp. (strain ATCC 51142)).